Here is a 126-residue protein sequence, read N- to C-terminus: uncharacterized protein (126 aa).

The first 27 residues, 1–27 (MKNLFIFLSLMMMFVLTACGGSKYDDA), serve as a signal peptide directing secretion. The segment at 93–126 (MTDMPGNGENDRLGLSKKTPDYEEVKGEETELEE) is disordered. Residues 101–126 (ENDRLGLSKKTPDYEEVKGEETELEE) show a composition bias toward basic and acidic residues.

This is an uncharacterized protein from Bacillus subtilis (strain 168).